The primary structure comprises 363 residues: Peptide chain release factor 1 (363 aa).

At Gln237 the chain carries N5-methylglutamine. A compositionally biased stretch (basic and acidic residues) spans 284-296; the sequence is EDEKRRSAEESTR. The disordered stretch occupies residues 284–305; sequence EDEKRRSAEESTRRSLVASGDR.

This sequence belongs to the prokaryotic/mitochondrial release factor family. Post-translationally, methylated by PrmC. Methylation increases the termination efficiency of RF1.

The protein resides in the cytoplasm. Functionally, peptide chain release factor 1 directs the termination of translation in response to the peptide chain termination codons UAG and UAA. The sequence is that of Peptide chain release factor 1 from Shewanella baltica (strain OS195).